Reading from the N-terminus, the 622-residue chain is Chaperone protein HscA homolog (622 aa).

Belongs to the heat shock protein 70 family.

In terms of biological role, chaperone involved in the maturation of iron-sulfur cluster-containing proteins. Has a low intrinsic ATPase activity which is markedly stimulated by HscB. This Burkholderia mallei (strain NCTC 10247) protein is Chaperone protein HscA homolog.